The primary structure comprises 414 residues: Esterase FrsA (414 aa).

This sequence belongs to the FrsA family.

It carries out the reaction a carboxylic ester + H2O = an alcohol + a carboxylate + H(+). Functionally, catalyzes the hydrolysis of esters. The chain is Esterase FrsA from Escherichia fergusonii (strain ATCC 35469 / DSM 13698 / CCUG 18766 / IAM 14443 / JCM 21226 / LMG 7866 / NBRC 102419 / NCTC 12128 / CDC 0568-73).